Consider the following 1436-residue polypeptide: Probable ATP-dependent RNA helicase spindle-E (1436 aa).

The 168-residue stretch at 124–291 folds into the Helicase ATP-binding domain; sequence LAAINANPVV…FTTTNSIPPV (168 aa). 137–144 contributes to the ATP binding site; the sequence is GETGCGKT. A DEAH box motif is present at residues 237–240; that stretch reads DEVH. Residues 337 to 524 form the Helicase C-terminal domain; sequence KIIMVIDNME…NSVLRAKELE (188 aa). Positions 940-1003 constitute a Tudor domain; that stretch reads ACDISKGMMV…RFMSEELIQQ (64 aa).

The protein belongs to the DEAD box helicase family. DEAH subfamily.

Its subcellular location is the cytoplasm. The catalysed reaction is ATP + H2O = ADP + phosphate + H(+). Its function is as follows. Probable ATP-binding RNA helicase which plays a central role during spermatogenesis and oogenesis by repressing transposable elements and preventing their mobilization, which is essential for the germline integrity. Acts via the piRNA metabolic process, which mediates the repression of transposable elements during meiosis by forming complexes composed of piRNAs and Piwi and govern the methylation and subsequent repression of transposons. Involved in the repression of LTR retrotransposon copia. Also involved in telomere regulation by repressing specialized telomeric retroelements HeT-A, TAHRE, and TART; Drosophila telomeres being maintained by transposition of specialized telomeric retroelements. Involved in telomeric trans-silencing, a repression mechanism by which a transposon or a transgene inserted in subtelomeric heterochromatin has the capacity to repress in trans in the female germline, a homologous transposon, or transgene located in euchromatin. Involved in the repression of testis-expressed Stellate genes by the homologous Su(Ste) repeats. Required for anteroposterior and dorsoventral axis formation during oogenesis. The sequence is that of Probable ATP-dependent RNA helicase spindle-E (spn-E) from Drosophila yakuba (Fruit fly).